The following is a 270-amino-acid chain: Glucosamine-6-phosphate deaminase (270 aa).

The Proton acceptor; for enolization step role is filled by aspartate 72. Aspartate 141 functions as the For ring-opening step in the catalytic mechanism. Residue histidine 143 is the Proton acceptor; for ring-opening step of the active site. The For ring-opening step role is filled by glutamate 148.

The protein belongs to the glucosamine/galactosamine-6-phosphate isomerase family. NagB subfamily.

The catalysed reaction is alpha-D-glucosamine 6-phosphate + H2O = beta-D-fructose 6-phosphate + NH4(+). It participates in amino-sugar metabolism; N-acetylneuraminate degradation; D-fructose 6-phosphate from N-acetylneuraminate: step 5/5. Its activity is regulated as follows. Allosterically activated by N-acetylglucosamine 6-phosphate (GlcNAc6P). In terms of biological role, catalyzes the reversible isomerization-deamination of glucosamine 6-phosphate (GlcN6P) to form fructose 6-phosphate (Fru6P) and ammonium ion. The sequence is that of Glucosamine-6-phosphate deaminase from Parabacteroides distasonis (strain ATCC 8503 / DSM 20701 / CIP 104284 / JCM 5825 / NCTC 11152).